A 302-amino-acid chain; its full sequence is Flavin-dependent thymidylate synthase (302 aa).

Residues 43–257 form the ThyX domain; that stretch reads GFVRVIDYMG…PFAYKAFEDY (215 aa). Residues Thr-89, 112 to 114, and Glu-120 each bind FAD; that span reads RHR. DUMP is bound by residues 109–112, 120–124, and Arg-196; these read QWIR and EYSAR. The ThyX motif motif lies at 112–122; that stretch reads RHRTANVNEYS. FAD is bound by residues 212–214 and His-218; that span reads DLH. Residue Arg-223 participates in dUMP binding. Arg-223 functions as the Involved in ionization of N3 of dUMP, leading to its activation in the catalytic mechanism.

The protein belongs to the thymidylate synthase ThyX family. In terms of assembly, homotetramer. FAD is required as a cofactor.

It catalyses the reaction dUMP + (6R)-5,10-methylene-5,6,7,8-tetrahydrofolate + NADPH + H(+) = dTMP + (6S)-5,6,7,8-tetrahydrofolate + NADP(+). The protein operates within pyrimidine metabolism; dTTP biosynthesis. Functionally, catalyzes the reductive methylation of 2'-deoxyuridine-5'-monophosphate (dUMP) to 2'-deoxythymidine-5'-monophosphate (dTMP) while utilizing 5,10-methylenetetrahydrofolate (mTHF) as the methyl donor, and NADPH and FADH(2) as the reductant. The protein is Flavin-dependent thymidylate synthase of Ruegeria pomeroyi (strain ATCC 700808 / DSM 15171 / DSS-3) (Silicibacter pomeroyi).